Reading from the N-terminus, the 207-residue chain is MIQKYSSRLLEKAIDQFATLPGVGRKTALRLALYLLRQPVENTRQFAAALVDLREHISYCRHCHNISDSDVCTICADPTRDQSTLCVVENIRDVMAIENTSQYRGLYHVLGGVISPMDGIGPGDLQIDSLVHRVASEQIHEVILALSTTMEGDTTNFFLFRKLEPTGVRVSVIARGIAIGDEIEYADEITLGRSILNRTDFSDSVKF.

Residues 60 to 75 (CRHCHNISDSDVCTIC) form a C4-type zinc finger. The 96-residue stretch at 83-178 (STLCVVENIR…RVSVIARGIA (96 aa)) folds into the Toprim domain.

The protein belongs to the RecR family.

Its function is as follows. May play a role in DNA repair. It seems to be involved in an RecBC-independent recombinational process of DNA repair. It may act with RecF and RecO. The protein is Recombination protein RecR of Porphyromonas gingivalis (strain ATCC BAA-308 / W83).